The chain runs to 177 residues: Isopentenyl-diphosphate Delta-isomerase 2 (177 aa).

2 residues coordinate Mn(2+): His24 and His30. A Nudix hydrolase domain is found at Met28–Lys160. Cys65 is a catalytic residue. Mg(2+) is bound at residue Cys65. His67 lines the Mn(2+) pocket. Glu85 serves as a coordination point for Mg(2+). Mn(2+)-binding residues include Glu110 and Glu112. Residue Glu112 is part of the active site.

It belongs to the IPP isomerase type 1 family. As to quaternary structure, homodimer. Requires Mg(2+) as cofactor. It depends on Mn(2+) as a cofactor.

The protein localises to the cytoplasm. It catalyses the reaction isopentenyl diphosphate = dimethylallyl diphosphate. The protein operates within isoprenoid biosynthesis; dimethylallyl diphosphate biosynthesis; dimethylallyl diphosphate from isopentenyl diphosphate: step 1/1. In terms of biological role, catalyzes the 1,3-allylic rearrangement of the homoallylic substrate isopentenyl (IPP) to its highly electrophilic allylic isomer, dimethylallyl diphosphate (DMAPP). The protein is Isopentenyl-diphosphate Delta-isomerase 2 of Photorhabdus laumondii subsp. laumondii (strain DSM 15139 / CIP 105565 / TT01) (Photorhabdus luminescens subsp. laumondii).